We begin with the raw amino-acid sequence, 520 residues long: Cytochrome P450 734A1 (520 aa).

A helical transmembrane segment spans residues 13 to 33; the sequence is VLVLSVILSLVIVKGMSLLWW. C463 serves as a coordination point for heme.

It belongs to the cytochrome P450 family. Requires heme as cofactor.

The protein localises to the membrane. Its function is as follows. Cytochrome P450 involved in brassinosteroids (BRs) inactivation and regulation of BRs homeostasis. Inactivates the BRs castasterone (CS) and brassinolide (BL) through carbon 26 hydroxylation. Acts in association with CYP72C1 to inactivate BRs and modulate photomorphogenesis. This chain is Cytochrome P450 734A1 (CYP734A1), found in Arabidopsis thaliana (Mouse-ear cress).